The primary structure comprises 257 residues: V-type proton ATPase subunit D (257 aa).

Positions 211 to 233 are disordered; sequence KKKDLKAKEAQKEENSANKTIME. Basic and acidic residues predominate over residues 216-226; it reads KAKEAQKEENS.

The protein belongs to the V-ATPase D subunit family. In terms of assembly, V-ATPase is a heteromultimeric enzyme composed of a peripheral catalytic V1 complex (components A to H) attached to an integral membrane V0 proton pore complex (components: a, c, c', c'' and d).

In terms of biological role, subunit of the peripheral V1 complex of vacuolar ATPase. Vacuolar ATPase is responsible for acidifying a variety of intracellular compartments in eukaryotic cells, thus providing most of the energy required for transport processes in the vacuolar system. The chain is V-type proton ATPase subunit D (atp6v1d) from Dictyostelium discoideum (Social amoeba).